The chain runs to 123 residues: Small ribosomal subunit protein bS18 (123 aa).

Polar residues predominate over residues 1–10 (MADETTVSTP). The disordered stretch occupies residues 1–52 (MADETTVSTPAASGTETPSTGGGGAPQGRPQGGPRGDRGPRPGGSGRDGGRK). The span at 20–34 (TGGGGAPQGRPQGGP) shows a compositional bias: gly residues.

This sequence belongs to the bacterial ribosomal protein bS18 family. As to quaternary structure, part of the 30S ribosomal subunit. Forms a tight heterodimer with protein bS6.

Its function is as follows. Binds as a heterodimer with protein bS6 to the central domain of the 16S rRNA, where it helps stabilize the platform of the 30S subunit. This chain is Small ribosomal subunit protein bS18, found in Koribacter versatilis (strain Ellin345).